The sequence spans 83 residues: Major outer membrane lipoprotein (83 aa).

Residues 1 to 19 (MNNVLKFSALALAAVLATG) form the signal peptide. Cys-20 is lipidated: N-palmitoyl cysteine. Cys-20 carries the S-diacylglycerol cysteine lipid modification.

The protein localises to the cell outer membrane. In Pseudomonas aeruginosa (strain ATCC 15692 / DSM 22644 / CIP 104116 / JCM 14847 / LMG 12228 / 1C / PRS 101 / PAO1), this protein is Major outer membrane lipoprotein (oprI).